The sequence spans 428 residues: Chaperone SurA (428 aa).

A signal peptide spans 1-19; it reads MNIWKTLLLGMLVTGSAVS. PpiC domains are found at residues 170 to 268 and 277 to 377; these read SVEY…KIED and VTEV…EVLD.

It is found in the periplasm. The enzyme catalyses [protein]-peptidylproline (omega=180) = [protein]-peptidylproline (omega=0). Functionally, chaperone involved in the correct folding and assembly of outer membrane proteins. Recognizes specific patterns of aromatic residues and the orientation of their side chains, which are found more frequently in integral outer membrane proteins. May act in both early periplasmic and late outer membrane-associated steps of protein maturation. The sequence is that of Chaperone SurA from Vibrio vulnificus (strain CMCP6).